An 80-amino-acid polypeptide reads, in one-letter code: Defensin-like protein 44 (80 aa).

The signal sequence occupies residues 1–27; it reads MAITKTSVTLLLLIIMAASLSNFSVLA. 4 disulfides stabilise this stretch: Cys-40–Cys-79, Cys-44–Cys-67, Cys-53–Cys-77, and Cys-57–Cys-78.

Belongs to the DEFL family.

It localises to the secreted. In Arabidopsis thaliana (Mouse-ear cress), this protein is Defensin-like protein 44.